An 86-amino-acid chain; its full sequence is CLAVATA3/ESR (CLE)-related protein 7 (86 aa).

Positions 1–22 (MASKALLLFVMLTFLLVIEMEG) are cleaved as a signal peptide. Residue N46 is glycosylated (N-linked (GlcNAc...) asparagine). A disordered region spans residues 63-86 (VDRFSPGGPDPQHHSYPLSSKPRI). A hydroxyproline mark is found at P68 and P71. P71 carries an O-linked (Ara...) hydroxyproline glycan.

It belongs to the CLV3/ESR signal peptide family. In terms of processing, the O-glycosylation (arabinosylation) of the hydroxyproline Pro-71 enhances binding affinity of the CLE7p peptide for its receptor. As to expression, expressed in roots and seedlings.

It localises to the secreted. The protein resides in the extracellular space. Its function is as follows. Extracellular signal peptide that regulates cell fate. The chain is CLAVATA3/ESR (CLE)-related protein 7 from Arabidopsis thaliana (Mouse-ear cress).